The chain runs to 487 residues: Aspartyl/glutamyl-tRNA(Asn/Gln) amidotransferase subunit B (487 aa).

Belongs to the GatB/GatE family. GatB subfamily. Heterotrimer of A, B and C subunits.

It catalyses the reaction L-glutamyl-tRNA(Gln) + L-glutamine + ATP + H2O = L-glutaminyl-tRNA(Gln) + L-glutamate + ADP + phosphate + H(+). The catalysed reaction is L-aspartyl-tRNA(Asn) + L-glutamine + ATP + H2O = L-asparaginyl-tRNA(Asn) + L-glutamate + ADP + phosphate + 2 H(+). Allows the formation of correctly charged Asn-tRNA(Asn) or Gln-tRNA(Gln) through the transamidation of misacylated Asp-tRNA(Asn) or Glu-tRNA(Gln) in organisms which lack either or both of asparaginyl-tRNA or glutaminyl-tRNA synthetases. The reaction takes place in the presence of glutamine and ATP through an activated phospho-Asp-tRNA(Asn) or phospho-Glu-tRNA(Gln). In Roseiflexus sp. (strain RS-1), this protein is Aspartyl/glutamyl-tRNA(Asn/Gln) amidotransferase subunit B.